Consider the following 164-residue polypeptide: uncharacterized protein (164 aa).

The span at 1-17 shows a compositional bias: polar residues; it reads MNSRVPATQSWFSSHLP. The interval 1–48 is disordered; the sequence is MNSRVPATQSWFSSHLPTTEPDLEPATAAEGSTTETATLSPETTSFND. The span at 24-45 shows a compositional bias: low complexity; that stretch reads EPATAAEGSTTETATLSPETTS. A helical transmembrane segment spans residues 64–84; it reads MLLSFGIITVIGLAVAMVLYI. Positions 106-130 form a coiled coil; the sequence is TEEQDELEQELLEHGRDAASMQAAA.

The protein resides in the membrane. This is an uncharacterized protein from Mus musculus (Mouse).